The following is a 340-amino-acid chain: Eukaryotic translation initiation factor 3 subunit I (340 aa).

5 WD repeats span residues 8–47 (GHERSLNQIKFNRDGDLLFSVAKDKIVCAWWSANGERLGT), 50–91 (GHQG…KVWD), 150–189 (CTESKATVAGWSYLGKYIIAGHEDGSVSQYDGKTGEQLEN), 194–233 (EFDHQINDIQFSQDRTYFITASKDKSAKLISSRNLAILKT), and 291–330 (GHFGPLNTVDVHPNGTAYASGGEDGYVRVHHFDKPYFDFM).

The protein belongs to the eIF-3 subunit I family. As to quaternary structure, component of the eukaryotic translation initiation factor 3 (eIF-3) complex.

It is found in the cytoplasm. Its function is as follows. Component of the eukaryotic translation initiation factor 3 (eIF-3) complex, which is involved in protein synthesis of a specialized repertoire of mRNAs and, together with other initiation factors, stimulates binding of mRNA and methionyl-tRNAi to the 40S ribosome. The eIF-3 complex specifically targets and initiates translation of a subset of mRNAs involved in cell proliferation. The protein is Eukaryotic translation initiation factor 3 subunit I (tif34) of Neosartorya fischeri (strain ATCC 1020 / DSM 3700 / CBS 544.65 / FGSC A1164 / JCM 1740 / NRRL 181 / WB 181) (Aspergillus fischerianus).